The primary structure comprises 214 residues: MGRRPARCYRYCKNKPYPKSRFCRGVPDAKIRIFDLGRKKAKVDEFPLCGHMVSDEYEQLSSEALEAARICANKYMVKSCGKDGFHIRVRLHPFHVIRINKMLSCAGADRLQTGMRGAFGKPQGTVARVHIGQVIMSIRTKLQNKEHVIEALRRAKFKFPGRQKIHISKKWGFTKFNADEFEDKVAAKRLIPDGCGVKYIPERGPLDKWRALHS.

This sequence belongs to the universal ribosomal protein uL16 family. As to quaternary structure, component of a male germ cell-specific 60S large ribosomal subunit (LSU), which contains RPL10L and RPL39L, instead of RPL10 and RPL39 paralogs. The composition of the rest of the complex is similar to classical ribosomes. In terms of tissue distribution, testis-specific.

It localises to the cytoplasm. Its function is as follows. Testis-specific component of the ribosome, which is required for the transition from prophase to metaphase in male meiosis I. Compensates for the inactivated X-linked RPL10 paralog during spermatogenesis. The ribosome is a large ribonucleoprotein complex responsible for the synthesis of proteins in the cell. The male germ cell-specific ribosome displays a ribosomal polypeptide exit tunnel of distinct size and charge states compared with the classical ribosome. It is responsible for regulating the biosynthesis and folding of a subset of male germ-cell-specific proteins that are essential for the formation of sperm. The sequence is that of Large ribosomal subunit protein uL16-like from Mus musculus (Mouse).